Consider the following 130-residue polypeptide: uncharacterized protein (130 aa).

An N-terminal signal peptide occupies residues 1–26; it reads MKFIYKLLFILSIVLFLFNNIITING. Asn88 is a glycosylation site (N-linked (GlcNAc...) asparagine).

The protein localises to the secreted. This is an uncharacterized protein from Dictyostelium discoideum (Social amoeba).